A 212-amino-acid polypeptide reads, in one-letter code: Thymidylate kinase (212 aa).

An ATP-binding site is contributed by 11 to 18; the sequence is GIEGSGKT.

It belongs to the thymidylate kinase family.

The catalysed reaction is dTMP + ATP = dTDP + ADP. Phosphorylation of dTMP to form dTDP in both de novo and salvage pathways of dTTP synthesis. The polypeptide is Thymidylate kinase (Buchnera aphidicola subsp. Baizongia pistaciae (strain Bp)).